Consider the following 610-residue polypeptide: MAPNLLTIGLLLTLIASGQAHLNIFLNLHEVLRLIGVSAELYYVREGAINDYALNFAVPVPANISDVTFTWQSLVDHPLPYSINIATSDTEVLPRPILNISRIGDVPVEPQTWGIALKCSGTRNAEVTVTINVEVILDRATNNNTNLIFKRKKICLREEQDSAHEEYDDDDLDLLQTARKGHGGDIHYVDRNDEHVVANGHQAPEKQRPVVTESPVGRGNSGGSKRDFDPMLRENLVPPASGLVTLIVGGILALVLVSTLILIAYCAKGPSKRHPSNGVHLIKTSSFQRLPTISSTAHNSIYVCPSTITPTYATLTRPFREYEHEPEEFNRRLQELTVQKCRVRLSCLVQEGNFGRIYRGTYNDCQEVLVKTVAQHASQLQVNLLLQESMMLYEASHPNVLSVLGISIEDYATPFVLYAATGSVRNLKSFLQDPSYARSVTTIQTVLMGSQLAMAMEHLHNHGVIHKDIAARNCVIDDQLRVKLTDSALSRDLFPGDYNSLGDGEYRPIKWLSLEALQKSHYNEGSDVWSFGVLMWEMCTLGKLPYAEIDPYEMEHYLKDGYRLAQPFNCPDELFTIMAYCWASMPAERPSFSQLQICLSEFHTQITRYV.

The signal sequence occupies residues 1 to 20 (MAPNLLTIGLLLTLIASGQA). The Extracellular segment spans residues 21–242 (HLNIFLNLHE…RENLVPPASG (222 aa)). Residues 24-155 (IFLNLHEVLR…NLIFKRKKIC (132 aa)) enclose the WIF domain. Asn-63, Asn-99, and Asn-143 each carry an N-linked (GlcNAc...) asparagine glycan. Positions 202–230 (QAPEKQRPVVTESPVGRGNSGGSKRDFDP) are disordered. Residues 243-263 (LVTLIVGGILALVLVSTLILI) traverse the membrane as a helical segment. The Cytoplasmic segment spans residues 264-610 (AYCAKGPSKR…EFHTQITRYV (347 aa)). Residues 343–606 (VRLSCLVQEG…ICLSEFHTQI (264 aa)) enclose the Protein kinase domain. ATP contacts are provided by residues 349–357 (VQEGNFGRI) and Lys-371. Asp-468 acts as the Proton acceptor in catalysis. A Phosphotyrosine; by autocatalysis modification is found at Tyr-498.

This sequence belongs to the protein kinase superfamily. Tyr protein kinase family. In the embryonic abdominal hemisegment, expression is restricted to cell body, axon and growth cone of a cluster of 20 ventral nerve cord interneurons. During muscle growth and attachment events in the embryonic abdominal hemisegment, expression is in somatic muscle fibers 21-23 at 10-13 hours and 2 patches of approximately 15 neighboring epidermal cells (dorsal and ventral attachment sites) at 6-13 hours.

The protein localises to the cell membrane. The catalysed reaction is L-tyrosyl-[protein] + ATP = O-phospho-L-tyrosyl-[protein] + ADP + H(+). In terms of biological role, probable coreceptor of Wnt proteins. Involved in neuronal pathway recognition and ventral muscle attachment site selection. Non-vital for development. May be part of a signal transduction cascade involved in learning and possibly memory. This is Tyrosine-protein kinase Drl (drl) from Drosophila melanogaster (Fruit fly).